The primary structure comprises 204 residues: MSNFTAKVPLSERMADVLISKDRWKDDEEGYLKVKYGLEIILINVMKFALVYGIALVTGLLLQTVTVHLSYLWLRRYSFGLHATKTLNCTLISLLMFVLAPFVFQNIPSNNWIVLGTFGFILLNMFLFAPADTESLPLIGEEHRKTLKRKAMIGTLILTGIALLIPFAEMKTLIMVGSLFQVISINPLTYKLLKRRYRNYEKYE.

Helical transmembrane passes span 52-74 (YGIALVTGLLLQTVTVHLSYLWL), 87-107 (LNCTLISLLMFVLAPFVFQNI), 111-131 (NWIVLGTFGFILLNMFLFAPA), 151-168 (AMIGTLILTGIALLIPFA), and 173-190 (LIMVGSLFQVISINPLTY).

This sequence belongs to the AgrB family.

It localises to the cell membrane. In terms of biological role, may be involved in the proteolytic processing of a quorum sensing system signal molecule precursor. The polypeptide is Putative AgrB-like protein (Listeria monocytogenes serovar 1/2a (strain ATCC BAA-679 / EGD-e)).